We begin with the raw amino-acid sequence, 121 residues long: Flagellar protein FliT (121 aa).

The required for homodimerization stretch occupies residues 1 to 50 (MNHAPHLYFAWQQLVEKSQLMLRLATEEQWDELIASEMAYVNAVQEIAHL). The fliD binding stretch occupies residues 60 to 98 (MQEQLRPMLRLILDNESKVKQLLQIRMDELAKLVGQSSV).

The protein belongs to the FliT family. As to quaternary structure, homodimer. Interacts with FliD and FlhC.

It localises to the cytoplasm. Its subcellular location is the cytosol. Dual-function protein that regulates the transcription of class 2 flagellar operons and that also acts as an export chaperone for the filament-capping protein FliD. As a transcriptional regulator, acts as an anti-FlhDC factor; it directly binds FlhC, thus inhibiting the binding of the FlhC/FlhD complex to class 2 promoters, resulting in decreased expression of class 2 flagellar operons. As a chaperone, effects FliD transition to the membrane by preventing its premature polymerization, and by directing it to the export apparatus. The polypeptide is Flagellar protein FliT (Escherichia coli O139:H28 (strain E24377A / ETEC)).